The sequence spans 318 residues: 1-phosphofructokinase (318 aa).

Residues 228-233 (SMGTEG) and 259-260 (GD) each bind ATP. D260 functions as the Proton acceptor in the catalytic mechanism.

This sequence belongs to the carbohydrate kinase PfkB family.

It carries out the reaction beta-D-fructose 1-phosphate + ATP = beta-D-fructose 1,6-bisphosphate + ADP + H(+). Catalyzes the ATP-dependent phosphorylation of fructose-l-phosphate to fructose-l,6-bisphosphate. The polypeptide is 1-phosphofructokinase (Xanthomonas campestris pv. campestris (strain ATCC 33913 / DSM 3586 / NCPPB 528 / LMG 568 / P 25)).